We begin with the raw amino-acid sequence, 108 residues long: Large ribosomal subunit protein uL24 (108 aa).

The protein belongs to the universal ribosomal protein uL24 family. In terms of assembly, part of the 50S ribosomal subunit.

One of two assembly initiator proteins, it binds directly to the 5'-end of the 23S rRNA, where it nucleates assembly of the 50S subunit. Its function is as follows. One of the proteins that surrounds the polypeptide exit tunnel on the outside of the subunit. This Pelobacter propionicus (strain DSM 2379 / NBRC 103807 / OttBd1) protein is Large ribosomal subunit protein uL24.